We begin with the raw amino-acid sequence, 78 residues long: MSNKGQTLQDPFLNTLRKEHVPVSIYLVNGIKLQGQIESFDQYVVLLRNTVTQMVYKHAISTVVPARAVNFQVDVPAE.

Residues 10-69 form the Sm domain; it reads DPFLNTLRKEHVPVSIYLVNGIKLQGQIESFDQYVVLLRNTVTQMVYKHAISTVVPARAV.

The protein belongs to the Hfq family. In terms of assembly, homohexamer.

In terms of biological role, RNA chaperone that binds small regulatory RNA (sRNAs) and mRNAs to facilitate mRNA translational regulation in response to envelope stress, environmental stress and changes in metabolite concentrations. Also binds with high specificity to tRNAs. The chain is RNA-binding protein Hfq from Bordetella petrii (strain ATCC BAA-461 / DSM 12804 / CCUG 43448).